Here is a 258-residue protein sequence, read N- to C-terminus: HTH-type transcriptional repressor GlcR (258 aa).

Residues 3 to 58 form the HTH deoR-type domain; that stretch reads QEERLVAILDFLKQHNRITTEQICTLLQVSRDTARRDLVKLEEQNAIIRTRGGAIL. Positions 20–39 form a DNA-binding region, H-T-H motif; it reads ITTEQICTLLQVSRDTARRD.

In terms of biological role, plays a role in carbon catabolite repression (CCR). Specifically required for transcriptional repression of the levanase operon by glucose but not by other sugars. The polypeptide is HTH-type transcriptional repressor GlcR (glcR) (Bacillus subtilis (strain 168)).